Here is a 255-residue protein sequence, read N- to C-terminus: Hydroxyacylglutathione hydrolase (255 aa).

The Zn(2+) site is built by His59, His61, Asp63, His64, His118, Asp144, and His182.

This sequence belongs to the metallo-beta-lactamase superfamily. Glyoxalase II family. As to quaternary structure, monomer. The cofactor is Zn(2+).

The catalysed reaction is an S-(2-hydroxyacyl)glutathione + H2O = a 2-hydroxy carboxylate + glutathione + H(+). It participates in secondary metabolite metabolism; methylglyoxal degradation; (R)-lactate from methylglyoxal: step 2/2. Functionally, thiolesterase that catalyzes the hydrolysis of S-D-lactoyl-glutathione to form glutathione and D-lactic acid. The protein is Hydroxyacylglutathione hydrolase of Synechococcus sp. (strain WH7803).